The chain runs to 175 residues: Pre-mRNA-splicing factor SNT309 (175 aa).

In terms of assembly, belongs to the NTC complex (or PRP19-associated complex), composed of at least CEF1, CLF1, ISY1, NTC20, SNT309, SYF1, SYF2, and PRP19. The NTC complex associates with the spliceosome after the release of the U1 and U4 snRNAs and forms the CWC spliceosome subcomplex (or CEF1-associated complex) reminiscent of a late-stage spliceosome composed also of the U2, U5 and U6 snRNAs and at least BUD13, BUD31, BRR2, CDC40, CUS1, CWC2, CWC15, CWC21, CWC22, CWC23, CWC24, CWC25, CWC27, ECM2, HSH155, IST3, LEA1, MSL1, PRP8, PRP9, PRP11, PRP21, PRP22, PRP45, PRP46, SLU7, SMB1, SMD1, SMD2, SMD3, SMX2, SMX3, SNU114, SPP2, RSE1 and YJU2. Interacts with PRP19.

The protein resides in the nucleus. Involved in pre-mRNA splicing by stabilizing the NTC (or PRP19-associated complex). As a component of the NTC complex, associates to the spliceosome to mediate conformational rearrangement or to stabilize the structure of the spliceosome after U4 snRNA dissociation, which leads to spliceosome maturation. This chain is Pre-mRNA-splicing factor SNT309 (SNT309), found in Saccharomyces cerevisiae (strain ATCC 204508 / S288c) (Baker's yeast).